The sequence spans 144 residues: Deoxyuridine 5'-triphosphate nucleotidohydrolase (144 aa).

Residues 63–65 (RSG), N76, and 80–82 (TID) each bind substrate.

The protein belongs to the dUTPase family. The cofactor is Mg(2+).

It carries out the reaction dUTP + H2O = dUMP + diphosphate + H(+). It functions in the pathway pyrimidine metabolism; dUMP biosynthesis; dUMP from dCTP (dUTP route): step 2/2. Functionally, this enzyme is involved in nucleotide metabolism: it produces dUMP, the immediate precursor of thymidine nucleotides and it decreases the intracellular concentration of dUTP so that uracil cannot be incorporated into DNA. This Phocaeicola vulgatus (strain ATCC 8482 / DSM 1447 / JCM 5826 / CCUG 4940 / NBRC 14291 / NCTC 11154) (Bacteroides vulgatus) protein is Deoxyuridine 5'-triphosphate nucleotidohydrolase.